Reading from the N-terminus, the 539-residue chain is Eukaryotic translation initiation factor 3 subunit L (539 aa).

The 213-residue stretch at 302-514 (TFSSILLYIQ…IHIADTKVSH (213 aa)) folds into the PCI domain.

Belongs to the eIF-3 subunit L family. As to quaternary structure, component of the eukaryotic translation initiation factor 3 (eIF-3) complex.

Its subcellular location is the cytoplasm. Functionally, component of the eukaryotic translation initiation factor 3 (eIF-3) complex, which is involved in protein synthesis of a specialized repertoire of mRNAs and, together with other initiation factors, stimulates binding of mRNA and methionyl-tRNAi to the 40S ribosome. The eIF-3 complex specifically targets and initiates translation of a subset of mRNAs involved in cell proliferation. The chain is Eukaryotic translation initiation factor 3 subunit L from Anopheles gambiae (African malaria mosquito).